The sequence spans 118 residues: MRVKGPSSKKHKKKILKLAKGYYGQKHRSYRRAKEQVMHSLNYAYRDRKDRKRQFRALWITRINAAARLNGLSYSQFINGLKKSGIELDRKILADMAVNDMEAFAKLVETAKKALQAA.

Belongs to the bacterial ribosomal protein bL20 family.

Functionally, binds directly to 23S ribosomal RNA and is necessary for the in vitro assembly process of the 50S ribosomal subunit. It is not involved in the protein synthesizing functions of that subunit. This chain is Large ribosomal subunit protein bL20, found in Sulfurihydrogenibium sp. (strain YO3AOP1).